The sequence spans 426 residues: Glutamyl-tRNA reductase (426 aa).

Residues 49–52 (TCNR), serine 109, 114–116 (EGQ), and glutamine 120 each bind substrate. Residue cysteine 50 is the Nucleophile of the active site. 189-194 (GAGETG) is a binding site for NADP(+).

Belongs to the glutamyl-tRNA reductase family. In terms of assembly, homodimer.

The catalysed reaction is (S)-4-amino-5-oxopentanoate + tRNA(Glu) + NADP(+) = L-glutamyl-tRNA(Glu) + NADPH + H(+). It participates in porphyrin-containing compound metabolism; protoporphyrin-IX biosynthesis; 5-aminolevulinate from L-glutamyl-tRNA(Glu): step 1/2. It functions in the pathway porphyrin-containing compound metabolism; chlorophyll biosynthesis. Catalyzes the NADPH-dependent reduction of glutamyl-tRNA(Glu) to glutamate 1-semialdehyde (GSA). The chain is Glutamyl-tRNA reductase from Chlorobium phaeobacteroides (strain BS1).